The following is a 264-amino-acid chain: 3-methyl-2-oxobutanoate hydroxymethyltransferase (264 aa).

Mg(2+) is bound by residues Asp-45 and Asp-84. 3-methyl-2-oxobutanoate contacts are provided by residues 45–46 (DS), Asp-84, and Lys-112. Mg(2+) is bound at residue Glu-114. The active-site Proton acceptor is Glu-181.

This sequence belongs to the PanB family. In terms of assembly, homodecamer; pentamer of dimers. The cofactor is Mg(2+).

It localises to the cytoplasm. It carries out the reaction 3-methyl-2-oxobutanoate + (6R)-5,10-methylene-5,6,7,8-tetrahydrofolate + H2O = 2-dehydropantoate + (6S)-5,6,7,8-tetrahydrofolate. It functions in the pathway cofactor biosynthesis; (R)-pantothenate biosynthesis; (R)-pantoate from 3-methyl-2-oxobutanoate: step 1/2. Its function is as follows. Catalyzes the reversible reaction in which hydroxymethyl group from 5,10-methylenetetrahydrofolate is transferred onto alpha-ketoisovalerate to form ketopantoate. This is 3-methyl-2-oxobutanoate hydroxymethyltransferase from Vibrio vulnificus (strain YJ016).